We begin with the raw amino-acid sequence, 522 residues long: Maturase K (522 aa).

Belongs to the intron maturase 2 family. MatK subfamily.

It localises to the plastid. The protein localises to the chloroplast. Functionally, usually encoded in the trnK tRNA gene intron. Probably assists in splicing its own and other chloroplast group II introns. In Iris danfordiae (Danford iris), this protein is Maturase K.